Reading from the N-terminus, the 487-residue chain is Argininosuccinate lyase (487 aa).

It belongs to the lyase 1 family. Argininosuccinate lyase subfamily.

The protein resides in the cytoplasm. It carries out the reaction 2-(N(omega)-L-arginino)succinate = fumarate + L-arginine. Its pathway is amino-acid biosynthesis; L-arginine biosynthesis; L-arginine from L-ornithine and carbamoyl phosphate: step 3/3. The sequence is that of Argininosuccinate lyase from Methanococcus aeolicus (strain ATCC BAA-1280 / DSM 17508 / OCM 812 / Nankai-3).